The primary structure comprises 596 residues: Nuclear receptor subfamily 2 group C member 2 (596 aa).

Position 19 is a phosphoserine; by MAPK (S19). Residue S46 is modified to Phosphoserine. Residues S55 and S68 each carry the phosphoserine; by MAPK modification. The residue at position 98 (S98) is a Phosphoserine. The nuclear receptor DNA-binding region spans 114–189 (VEYCVVCGDK…MGMKMESVQS (76 aa)). 2 consecutive NR C4-type zinc fingers follow at residues 117 to 137 (CVVCGDKASGRHYGAVSCEGC) and 153 to 177 (CRSSQDCIINKHHRNRCQFCRLKKC). A Glycyl lysine isopeptide (Lys-Gly) (interchain with G-Cter in SUMO2) cross-link involves residue K192. S219 is modified (phosphoserine). The residue at position 231 (K231) is an N6-acetyllysine. In terms of domain architecture, NR LBD spans 341–583 (GSIHVISRDQ…SIIPYILKME (243 aa)).

It belongs to the nuclear hormone receptor family. NR2 subfamily. In terms of assembly, homodimer; can bind DNA as homodimer. Heterodimer; binds DNA as a heterodimer with NR2C1 required for chromatin remodeling and for binding to promoter regions such as globin DR1 repeats. Interacts with NR2C2AP; the interaction represses selective NR2C2-mediated transcriptional activity. Interacts with PCAF; the interaction preferentially occurs on the non-phosphorylated form and induces NR2C2-mediated transactivation activity and does not require the ligand-binding domain. Interacts (MAPK-mediated phosphorylated form) with NRIP1; the interaction promotes repression of NR2C2-mediated activity. Interacts with NLRP10. Interacts (via ligand-binding region) with transcriptional corepressor JAZF1; the interaction promotes NR2C2-mediated transcriptional repression. In terms of processing, phosphorylation on Ser-19 and Ser-68 is an important regulator of NR2C2-mediated transcriptional activity. Phosphorylation on these residues recruits the corepressor, NRIP1, leading to transcripional repression, whereas the non-phosphorylated form preferentially recruits the coactivator, PCAF. Expressed in hepatocytes. Also expressed in granule cells of the hippocampus and the cerebellum.

The protein resides in the nucleus. Its function is as follows. Orphan nuclear receptor that can act as a repressor or activator of transcription. An important repressor of nuclear receptor signaling pathways such as retinoic acid receptor, retinoid X, vitamin D3 receptor, thyroid hormone receptor and estrogen receptor pathways. May regulate gene expression during the late phase of spermatogenesis. Activates transcriptional activity of LHCG and is antagonist of PPARA-mediated transactivation. Together with NR2C1, forms the core of the DRED (direct repeat erythroid-definitive) complex that represses embryonic and fetal globin transcription including that of GATA1. Binds to hormone response elements (HREs) consisting of two 5'-AGGTCA-3' half site direct repeat consensus sequences. Plays a fundamental role in early embryonic development and embryonic stem cells. Required for normal spermatogenesis and cerebellum development. Appears to be important for neurodevelopmentally regulated behavior. The sequence is that of Nuclear receptor subfamily 2 group C member 2 (Nr2c2) from Rattus norvegicus (Rat).